A 468-amino-acid chain; its full sequence is UDP-N-acetylmuramate--L-alanine ligase (468 aa).

An ATP-binding site is contributed by 112–118 (GMHGKTT).

Belongs to the MurCDEF family.

It is found in the cytoplasm. It catalyses the reaction UDP-N-acetyl-alpha-D-muramate + L-alanine + ATP = UDP-N-acetyl-alpha-D-muramoyl-L-alanine + ADP + phosphate + H(+). Its pathway is cell wall biogenesis; peptidoglycan biosynthesis. Its function is as follows. Cell wall formation. The polypeptide is UDP-N-acetylmuramate--L-alanine ligase (Koribacter versatilis (strain Ellin345)).